Consider the following 213-residue polypeptide: Major fimbrial subunit (213 aa).

An N-terminal signal peptide occupies residues 1 to 20 (MKKTLLGSLILLAFAGNVQA). A disulfide bridge links Cys-41 with Cys-81.

Belongs to the fimbrial protein family.

Its subcellular location is the fimbrium. In terms of biological role, mediates adherence to oropharyngeal epithelial cells. Helps the airway colonization process. In Haemophilus influenzae, this protein is Major fimbrial subunit (hifA).